Consider the following 83-residue polypeptide: HPITESAEMPYPGPASLEERGVGSLDDLSLSEQNYPPQRGAGLRYATLEVLLEKQSLLNPFSRVFGIRKQFAGTTECFWKYCV.

Positions 49 to 71 (EVLLEKQSLLNPFSRVFGIRKQF) are excised as a propeptide. A disulfide bridge links Cys-77 with Cys-82.

The protein belongs to the urotensin-2 family.

The protein resides in the secreted. In terms of biological role, urotensin is found in the teleost caudal neurosecretory system. It has a suggested role in osmoregulation and as a corticotropin-releasing factor. The non-hormonal portion of this precursor may be a urotensin binding protein, urophysin. In Platichthys flesus (European flounder), this protein is Urotensin-2.